The sequence spans 1074 residues: Transmembrane protein 132E (1074 aa).

Positions Met-1 to Gly-25 are cleaved as a signal peptide. Topologically, residues Arg-26–Ala-893 are extracellular. Residues Asn-70 and Asn-91 are each glycosylated (N-linked (GlcNAc...) asparagine). Disordered regions lie at residues Pro-202 to Glu-226 and Ala-241 to Thr-264. Residues Gly-243–Val-256 are compositionally biased toward gly residues. N-linked (GlcNAc...) asparagine glycosylation is found at Asn-318 and Asn-399. Disordered stretches follow at residues Arg-563–Gly-585 and Gly-814–Thr-867. The span at Gly-841 to Pro-862 shows a compositional bias: low complexity. A helical membrane pass occupies residues Leu-894–Leu-914. Residues Arg-915–Ala-1074 lie on the Cytoplasmic side of the membrane. The segment at Val-946–Leu-1063 is disordered. The span at Ser-972–His-984 shows a compositional bias: low complexity. Acidic residues predominate over residues Gly-1034–Leu-1044.

Belongs to the TMEM132 family.

Its subcellular location is the membrane. Required for normal inner ear hair cell function and hearing. This chain is Transmembrane protein 132E, found in Homo sapiens (Human).